The chain runs to 392 residues: NADH-quinone oxidoreductase subunit D (392 aa).

Belongs to the complex I 49 kDa subunit family. In terms of assembly, NDH-1 is composed of 14 different subunits. Subunits NuoB, C, D, E, F, and G constitute the peripheral sector of the complex.

It is found in the cell inner membrane. The catalysed reaction is a quinone + NADH + 5 H(+)(in) = a quinol + NAD(+) + 4 H(+)(out). NDH-1 shuttles electrons from NADH, via FMN and iron-sulfur (Fe-S) centers, to quinones in the respiratory chain. The immediate electron acceptor for the enzyme in this species is believed to be ubiquinone. Couples the redox reaction to proton translocation (for every two electrons transferred, four hydrogen ions are translocated across the cytoplasmic membrane), and thus conserves the redox energy in a proton gradient. This is NADH-quinone oxidoreductase subunit D from Paramagnetospirillum magneticum (strain ATCC 700264 / AMB-1) (Magnetospirillum magneticum).